The primary structure comprises 349 residues: Dihydroorotate dehydrogenase (quinone) (349 aa).

FMN contacts are provided by residues 59 to 63 (PGFDK) and Thr-83. Lys-63 provides a ligand contact to substrate. Substrate is bound at residue 108–112 (NRMGF). FMN contacts are provided by Asn-142 and Asn-173. Asn-173 serves as a coordination point for substrate. Ser-176 functions as the Nucleophile in the catalytic mechanism. Asn-178 is a substrate binding site. The FMN site is built by Lys-212 and Ser-240. 241-242 (NT) is a substrate binding site. FMN-binding positions include Gly-262, Gly-291, and 312-313 (YS).

It belongs to the dihydroorotate dehydrogenase family. Type 2 subfamily. In terms of assembly, monomer. FMN serves as cofactor.

It localises to the cell membrane. The enzyme catalyses (S)-dihydroorotate + a quinone = orotate + a quinol. It participates in pyrimidine metabolism; UMP biosynthesis via de novo pathway; orotate from (S)-dihydroorotate (quinone route): step 1/1. Catalyzes the conversion of dihydroorotate to orotate with quinone as electron acceptor. In Novosphingobium aromaticivorans (strain ATCC 700278 / DSM 12444 / CCUG 56034 / CIP 105152 / NBRC 16084 / F199), this protein is Dihydroorotate dehydrogenase (quinone).